The primary structure comprises 106 residues: Urease subunit beta (106 aa).

This sequence belongs to the urease beta subunit family. As to quaternary structure, heterotrimer of UreA (gamma), UreB (beta) and UreC (alpha) subunits. Three heterotrimers associate to form the active enzyme.

The protein localises to the cytoplasm. It carries out the reaction urea + 2 H2O + H(+) = hydrogencarbonate + 2 NH4(+). It functions in the pathway nitrogen metabolism; urea degradation; CO(2) and NH(3) from urea (urease route): step 1/1. The protein is Urease subunit beta of Alkalilimnicola ehrlichii (strain ATCC BAA-1101 / DSM 17681 / MLHE-1).